The following is a 283-amino-acid chain: Phosphatidylserine decarboxylase proenzyme (283 aa).

Residues Asp-90, His-143, and Ser-248 each act as charge relay system; for autoendoproteolytic cleavage activity in the active site. The active-site Schiff-base intermediate with substrate; via pyruvic acid; for decarboxylase activity is Ser-248. Ser-248 carries the post-translational modification Pyruvic acid (Ser); by autocatalysis.

The protein belongs to the phosphatidylserine decarboxylase family. PSD-B subfamily. Prokaryotic type I sub-subfamily. In terms of assembly, heterodimer of a large membrane-associated beta subunit and a small pyruvoyl-containing alpha subunit. Requires pyruvate as cofactor. In terms of processing, is synthesized initially as an inactive proenzyme. Formation of the active enzyme involves a self-maturation process in which the active site pyruvoyl group is generated from an internal serine residue via an autocatalytic post-translational modification. Two non-identical subunits are generated from the proenzyme in this reaction, and the pyruvate is formed at the N-terminus of the alpha chain, which is derived from the carboxyl end of the proenzyme. The autoendoproteolytic cleavage occurs by a canonical serine protease mechanism, in which the side chain hydroxyl group of the serine supplies its oxygen atom to form the C-terminus of the beta chain, while the remainder of the serine residue undergoes an oxidative deamination to produce ammonia and the pyruvoyl prosthetic group on the alpha chain. During this reaction, the Ser that is part of the protease active site of the proenzyme becomes the pyruvoyl prosthetic group, which constitutes an essential element of the active site of the mature decarboxylase.

The protein resides in the cell membrane. It carries out the reaction a 1,2-diacyl-sn-glycero-3-phospho-L-serine + H(+) = a 1,2-diacyl-sn-glycero-3-phosphoethanolamine + CO2. It functions in the pathway phospholipid metabolism; phosphatidylethanolamine biosynthesis; phosphatidylethanolamine from CDP-diacylglycerol: step 2/2. Functionally, catalyzes the formation of phosphatidylethanolamine (PtdEtn) from phosphatidylserine (PtdSer). In Francisella tularensis subsp. mediasiatica (strain FSC147), this protein is Phosphatidylserine decarboxylase proenzyme.